We begin with the raw amino-acid sequence, 281 residues long: ATP phosphoribosyltransferase (281 aa).

The protein belongs to the ATP phosphoribosyltransferase family. Long subfamily. It depends on Mg(2+) as a cofactor.

Its subcellular location is the cytoplasm. It catalyses the reaction 1-(5-phospho-beta-D-ribosyl)-ATP + diphosphate = 5-phospho-alpha-D-ribose 1-diphosphate + ATP. Its pathway is amino-acid biosynthesis; L-histidine biosynthesis; L-histidine from 5-phospho-alpha-D-ribose 1-diphosphate: step 1/9. Feedback inhibited by histidine. In terms of biological role, catalyzes the condensation of ATP and 5-phosphoribose 1-diphosphate to form N'-(5'-phosphoribosyl)-ATP (PR-ATP). Has a crucial role in the pathway because the rate of histidine biosynthesis seems to be controlled primarily by regulation of HisG enzymatic activity. This Natronomonas pharaonis (strain ATCC 35678 / DSM 2160 / CIP 103997 / JCM 8858 / NBRC 14720 / NCIMB 2260 / Gabara) (Halobacterium pharaonis) protein is ATP phosphoribosyltransferase.